A 330-amino-acid polypeptide reads, in one-letter code: Putative [LysW]-L-2-aminoadipate/[LysW]-L-glutamate phosphate reductase (330 aa).

Residues Ser-10–Ile-13 and Ser-34–Arg-36 each bind NADP(+). Residue Cys-142 is part of the active site. Asn-297 contacts NADP(+).

This sequence belongs to the NAGSA dehydrogenase family. Type 1 subfamily. LysY sub-subfamily.

The protein localises to the cytoplasm. It catalyses the reaction [amino-group carrier protein]-C-terminal-N-(1-carboxy-5-oxopentan-1-yl)-L-glutamine + phosphate + NADP(+) = [amino-group carrier protein]-C-terminal-N-(1-carboxy-5-phosphooxy-5-oxopentan-1-yl)-L-glutamine + NADPH + H(+). The enzyme catalyses [amino-group carrier protein]-C-terminal-gamma-(L-glutamyl-5-semialdehyde)-L-glutamate + phosphate + NADP(+) = [amino-group carrier protein]-C-terminal-gamma-(5-phospho-L-glutamyl)-L-glutamate + NADPH + H(+). The protein operates within amino-acid biosynthesis; L-lysine biosynthesis via AAA pathway; L-lysine from L-alpha-aminoadipate (Thermus route): step 3/5. It functions in the pathway amino-acid biosynthesis; L-arginine biosynthesis. In terms of biological role, involved in both the arginine and lysine biosynthetic pathways. The protein is Putative [LysW]-L-2-aminoadipate/[LysW]-L-glutamate phosphate reductase of Thermococcus kodakarensis (strain ATCC BAA-918 / JCM 12380 / KOD1) (Pyrococcus kodakaraensis (strain KOD1)).